An 874-amino-acid chain; its full sequence is Alanine--tRNA ligase (874 aa).

Histidine 562, histidine 566, cysteine 664, and histidine 668 together coordinate Zn(2+).

It belongs to the class-II aminoacyl-tRNA synthetase family. Requires Zn(2+) as cofactor.

The protein resides in the cytoplasm. It carries out the reaction tRNA(Ala) + L-alanine + ATP = L-alanyl-tRNA(Ala) + AMP + diphosphate. Catalyzes the attachment of alanine to tRNA(Ala) in a two-step reaction: alanine is first activated by ATP to form Ala-AMP and then transferred to the acceptor end of tRNA(Ala). Also edits incorrectly charged Ser-tRNA(Ala) and Gly-tRNA(Ala) via its editing domain. The sequence is that of Alanine--tRNA ligase from Shewanella sp. (strain MR-7).